The chain runs to 571 residues: Kinesin light chain (571 aa).

A coiled-coil region spans residues 54 to 160 (LLTSMKTIRK…KKHLEFMNEM (107 aa)). Over residues 167–177 (EAQVNEEKESE) the composition is skewed to basic and acidic residues. The disordered stretch occupies residues 167 to 210 (EAQVNEEKESEQSSLDLGFPDDDDDGGQPEVLSPTQPSAMAQAA). 6 TPR repeats span residues 220-253 (LRTLHNLVIQYASQGRYEVAVPLCKQALEDLEKT), 262-295 (ATMLNILALVYRDQGKYKEAANLLNDALGIREKT), 304-337 (AATLNNLAVLYGKRGKYKDAEPLCKRALVIREKV), 346-379 (AKQLNNLALLCQNQGKYEEVERYYQRALEIYQKE), 388-421 (AKTKNNLASAYLKQGKYKQAEILYKEVLTRAHEK), and 471-504 (TTTLKNLGALYRRQGKYEAAETLEECALRSRKSA). The segment at 518–571 (GSDFSKGQSPKDRKRSNSRDRNRRDSMDSVSYEKSGDGDEHEKSKLHVGTSHKQ) is disordered. 2 stretches are compositionally biased toward basic and acidic residues: residues 526–544 (SPKDRKRSNSRDRNRRDSM) and 551–562 (KSGDGDEHEKSK).

It belongs to the kinesin light chain family. In terms of assembly, oligomeric complex composed of two heavy chains and two light chains.

The protein resides in the cytoplasm. The protein localises to the cytoskeleton. In terms of biological role, kinesin is a microtubule-associated force-producing protein that may play a role in organelle transport. The light chain may function in coupling of cargo to the heavy chain or in the modulation of its ATPase activity. The chain is Kinesin light chain from Doryteuthis pealeii (Longfin inshore squid).